A 338-amino-acid polypeptide reads, in one-letter code: Anthranilate phosphoribosyltransferase (338 aa).

5-phospho-alpha-D-ribose 1-diphosphate-binding positions include Gly81, 84 to 85 (GD), Thr89, 91 to 94 (NIST), 109 to 117 (KHGNRALSS), and Ala121. Gly81 lines the anthranilate pocket. Ser93 is a binding site for Mg(2+). Asn112 is an anthranilate binding site. Position 167 (Arg167) interacts with anthranilate. The Mg(2+) site is built by Asp225 and Glu226.

It belongs to the anthranilate phosphoribosyltransferase family. In terms of assembly, homodimer. Requires Mg(2+) as cofactor.

It carries out the reaction N-(5-phospho-beta-D-ribosyl)anthranilate + diphosphate = 5-phospho-alpha-D-ribose 1-diphosphate + anthranilate. It participates in amino-acid biosynthesis; L-tryptophan biosynthesis; L-tryptophan from chorismate: step 2/5. Functionally, catalyzes the transfer of the phosphoribosyl group of 5-phosphorylribose-1-pyrophosphate (PRPP) to anthranilate to yield N-(5'-phosphoribosyl)-anthranilate (PRA). The protein is Anthranilate phosphoribosyltransferase of Rhizobium etli (strain CIAT 652).